A 153-amino-acid polypeptide reads, in one-letter code: Transcriptional repressor NrdR (153 aa).

A zinc finger spans residues 3–34 (CPYCGYEDSKVIDTRPADEGRTIKRRRECLKC). In terms of domain architecture, ATP-cone spans 49-139 (ILVIKKDNRR…VYRQFKDINT (91 aa)).

The protein belongs to the NrdR family. The cofactor is Zn(2+).

In terms of biological role, negatively regulates transcription of bacterial ribonucleotide reductase nrd genes and operons by binding to NrdR-boxes. The sequence is that of Transcriptional repressor NrdR from Caldicellulosiruptor saccharolyticus (strain ATCC 43494 / DSM 8903 / Tp8T 6331).